The sequence spans 267 residues: Hydroxyethylthiazole kinase (267 aa).

Met48 is a substrate binding site. 2 residues coordinate ATP: Arg124 and Ser170. Position 197 (Gly197) interacts with substrate.

The protein belongs to the Thz kinase family. The cofactor is Mg(2+).

It catalyses the reaction 5-(2-hydroxyethyl)-4-methylthiazole + ATP = 4-methyl-5-(2-phosphooxyethyl)-thiazole + ADP + H(+). The protein operates within cofactor biosynthesis; thiamine diphosphate biosynthesis; 4-methyl-5-(2-phosphoethyl)-thiazole from 5-(2-hydroxyethyl)-4-methylthiazole: step 1/1. Functionally, catalyzes the phosphorylation of the hydroxyl group of 4-methyl-5-beta-hydroxyethylthiazole (THZ). This is Hydroxyethylthiazole kinase from Leptospira biflexa serovar Patoc (strain Patoc 1 / Ames).